The following is a 3411-amino-acid chain: Genome polyprotein (3411 aa).

Over 1–104 the chain is Cytoplasmic; that stretch reads MSGRKAQGKT…LSSRKRRSHD (104 aa). Positions 102 to 121 are cleaved as a propeptide — ER anchor for the capsid protein C, removed in mature form by serine protease NS3; sequence SHDALAVQFLILGMLLMAGG. The chain crosses the membrane as a helical span at residues 105–125; it reads ALAVQFLILGMLLMAGGVTLV. Residues 126-244 lie on the Extracellular side of the membrane; sequence RKNRWLLLNV…GERQLQKIER (119 aa). 2 N-linked (GlcNAc...) asparagine; by host glycosylation sites follow: Asn134 and Asn150. A helical membrane pass occupies residues 245 to 265; sequence WLVRNPFFAVTALTIAYLVGS. The Cytoplasmic segment spans residues 266–270; it reads NMTQR. The chain crosses the membrane as a helical span at residues 271 to 285; sequence VVIALLVLAVGPAYS. At 286-730 the chain is on the extracellular side; that stretch reads AHCIGITDRD…TVFGSAFQGL (445 aa). Cystine bridges form between Cys288/Cys315, Cys345/Cys401, Cys345/Cys406, Cys359/Cys390, Cys377/Cys401, Cys377/Cys406, Cys467/Cys568, and Cys585/Cys615. The fusion peptide stretch occupies residues 383–396; it reads DRGWGNGCGLFGKG. The helical transmembrane segment at 731–751 threads the bilayer; the sequence is FGGLSWITKVIMGAVLIWVGI. The Extracellular portion of the chain corresponds to 752-757; the sequence is NTRNMT. Residues 758–778 traverse the membrane as a helical segment; the sequence is MSMSMILVGVIMMFLSLGVGA. The Extracellular portion of the chain corresponds to 779 to 1132; sequence DQGCAINFGK…LVRSWVTAGE (354 aa). 6 disulfide bridges follow: Cys782–Cys793, Cys833–Cys921, Cys957–Cys1002, Cys1058–Cys1107, Cys1069–Cys1091, and Cys1090–Cys1094. N-linked (GlcNAc...) asparagine; by host glycans are attached at residues Asn908 and Asn986. A helical transmembrane segment spans residues 1133–1153; that stretch reads IHAVPFGLVSMMIAMEVVLRK. Residues 1154–1201 are Cytoplasmic-facing; sequence RQGPKQMLVGGVVLLGAMLVGQVTLLDLLKLTVAVGLHFHEMNNGGDA. A helical transmembrane segment spans residues 1202–1222; sequence MYMALIAAFSIRPGLLIGFGL. Over 1223 to 1287 the chain is Lumenal; that stretch reads RTLWSPRERL…ILPLMALLTP (65 aa). The helical transmembrane segment at 1288–1308 threads the bilayer; that stretch reads VTMAEVRLAAMLFCTVVIIGV. Over 1309 to 1355 the chain is Cytoplasmic; it reads LHQNSKDTSMQKTIPLVALTLTSYLGLTQPFLGLCAFLATRLFGRRS. A helical transmembrane segment spans residues 1356 to 1376; sequence IPVNEALAAAGLVGVLAGLAF. Over 1377–1378 the chain is Lumenal; the sequence is QE. Residues 1379 to 1399 form a helical membrane-spanning segment; the sequence is MENFLGPIAVGGILMMLVSVA. At 1400 to 1456 the chain is on the cytoplasmic side; sequence GRVDGLELRKLGEVSWEEEAEISGSSARYDVALSEQGEFKLLSEEKVPWDQVVMTSL. Residues 1407 to 1446 are interacts with and activates NS3 protease; that stretch reads LRKLGEVSWEEEAEISGSSARYDVALSEQGEFKLLSEEKV. The segment at residues 1457 to 1477 is an intramembrane region (helical); it reads ALVGAAIHPFALLLVLAGWLF. The Cytoplasmic portion of the chain corresponds to 1478-2157; the sequence is HVKGARRSGD…RNALSMMPEA (680 aa). The Peptidase S7 domain maps to 1485-1665; that stretch reads SGDVLWDIPT…EVKEEGKEEL (181 aa). Catalysis depends on charge relay system; for serine protease NS3 activity residues His1537, Asp1561, and Ser1622. Positions 1669 to 1825 constitute a Helicase ATP-binding domain; that stretch reads PTMLKKGMTT…HSNGEIEDVQ (157 aa). The segment at 1673-1676 is important for RNA-binding; that stretch reads KKGM. Position 1682–1689 (1682–1689) interacts with ATP; it reads FHPGAGKT. The DEAH box motif lies at 1773–1776; the sequence is DEAH. The 178-residue stretch at 1820-1997 folds into the Helicase C-terminal domain; sequence EIEDVQTDIP…VRGGMVAPLY (178 aa). Lys1877 carries the post-translational modification N6-acetyllysine; by host. The segment at 1942 to 1961 is disordered; it reads AAQRRGRIGRNPNRDGDSYY. Residues 2158–2178 traverse the membrane as a helical segment; that stretch reads MTIAMLFILAGLLTSGMVIFF. Residues 2179-2186 lie on the Lumenal side of the membrane; that stretch reads MSPKGISR. Positions 2187–2207 form an intramembrane region, helical; sequence MSMAMGTMAGCGYLMFLGGVK. At 2208-2209 the chain is on the lumenal side; sequence PT. Residues 2210-2230 form a helical membrane-spanning segment; it reads HISYIMLIFFVLMVVVIPEPG. Over 2231–2241 the chain is Cytoplasmic; the sequence is QQRSIQDNQVA. Residues 2242–2262 form a helical membrane-spanning segment; the sequence is YLIIGILTLVSVVAANELGML. Topologically, residues 2263–2293 are lumenal; that stretch reads EKTKEDLFGKKDLIPSSASPWSWPDLDLKPG. The segment at residues 2294 to 2314 is an intramembrane region (helical); it reads AAWTVYVGIVTMLSPMLHHWI. Topologically, residues 2315–2360 are lumenal; it reads KVEYGNLSLSGIAQSASVLSFMDKGIPFMKMNISVIILLVSGWNSI. Residues 2361-2380 form a helical membrane-spanning segment; sequence TVMPLLCGIGCAMLHWSLIL. Residues 2381 to 2421 are Cytoplasmic-facing; sequence PGIKAQQSKLAQRRVFHGVAKNPVVDGNPTVDIEEAPEMPA. Residues 2422-2442 form a helical membrane-spanning segment; that stretch reads LYEKKLALYLLLALSLASVAM. The Lumenal portion of the chain corresponds to 2443–2445; sequence CRT. Residues 2446–2466 traverse the membrane as a helical segment; the sequence is PFSLAEGIVLASAALGPLIEG. Topologically, residues 2467 to 3411 are cytoplasmic; that stretch reads NTSLLWNGPM…DADLQPGELI (945 aa). One can recognise an mRNA cap 0-1 NS5-type MT domain in the interval 2507-2771; the sequence is GRANGKTLGE…DVILPIGTRS (265 aa). Ser2562 is an S-adenosyl-L-methionine binding site. Ser2562 carries the post-translational modification Phosphoserine. Lys2567 serves as the catalytic For 2'-O-MTase activity. S-adenosyl-L-methionine is bound by residues Gly2592, Trp2593, Thr2610, Leu2611, Asp2637, and Ile2638. The active-site For 2'-O-MTase activity is the Asp2652. Ile2653 is a binding site for S-adenosyl-L-methionine. Residues Lys2688 and Glu2724 each act as for 2'-O-MTase activity in the active site. Residue Tyr2726 participates in S-adenosyl-L-methionine binding. Residues 2878 to 2911 carry the Nuclear localization signal motif; sequence RKIMKVVNRWLFRHLAREKNPRLCTKEEFIAKVR. Residues Glu2945, His2949, Cys2954, and Cys2957 each contribute to the Zn(2+) site. In terms of domain architecture, RdRp catalytic spans 3035–3187; the sequence is GGFYADDTAG…RPIDDRFGLA (153 aa). 3 residues coordinate Zn(2+): His3222, Cys3238, and Cys3357.

In the N-terminal section; belongs to the class I-like SAM-binding methyltransferase superfamily. mRNA cap 0-1 NS5-type methyltransferase family. Homodimer. Interacts (via N-terminus) with host EXOC1 (via C-terminus); this interaction results in EXOC1 degradation through the proteasome degradation pathway. As to quaternary structure, forms heterodimers with envelope protein E in the endoplasmic reticulum and Golgi. In terms of assembly, homodimer; in the endoplasmic reticulum and Golgi. Interacts with protein prM. Interacts with non-structural protein 1. Homodimer; Homohexamer when secreted. Interacts with envelope protein E. As to quaternary structure, interacts (via N-terminus) with serine protease NS3. In terms of assembly, forms a heterodimer with serine protease NS3. May form homooligomers. Forms a heterodimer with NS2B. Interacts with non-structural protein 2A (via N-terminus). Interacts with NS4B. Interacts with unphosphorylated RNA-directed RNA polymerase NS5; this interaction stimulates RNA-directed RNA polymerase NS5 guanylyltransferase activity. NS3 interacts with host PDCD6IP; this interaction contributes to virion release. As to quaternary structure, interacts with serine protease NS3. In terms of assembly, homodimer. Interacts with host STAT2; this interaction prevents the establishment of cellular antiviral state. Interacts with serine protease NS3. Interacts with host TRIM23; this interaction leads to NS5 ubiquitination. Post-translationally, specific enzymatic cleavages in vivo yield mature proteins. The nascent capsid protein C contains a C-terminal hydrophobic domain that act as a signal sequence for translocation of prM into the lumen of the ER. Mature capsid protein C is cleaved at a site upstream of this hydrophobic domain by NS3. prM is cleaved in post-Golgi vesicles by a host furin, releasing the mature small envelope protein M, and peptide pr. Non-structural protein 2A-alpha, a C-terminally truncated form of non-structural protein 2A, results from partial cleavage by NS3. Specific enzymatic cleavages in vivo yield mature proteins peptide 2K acts as a signal sequence and is removed from the N-terminus of NS4B by the host signal peptidase in the ER lumen. Signal cleavage at the 2K-4B site requires a prior NS3 protease-mediated cleavage at the 4A-2K site. In terms of processing, cleaved in post-Golgi vesicles by a host furin, releasing the mature small envelope protein M, and peptide pr. This cleavage is incomplete as up to 30% of viral particles still carry uncleaved prM. N-glycosylated. Post-translationally, N-glycosylated. The excreted form is glycosylated and this is required for efficient secretion of the protein from infected cells. In terms of processing, polyubiquitinated; ubiquitination is probably mediated by host TRIM23 and is prerequisite for NS5-STAT2 interaction. NS5 is not ISGylated or sumoylated. Acetylated by host KAT5. Acetylation modulates NS3 RNA-binding and unwinding activities and plays an important positive role for viral replication. Post-translationally, phosphorylated on serines residues. This phosphorylation may trigger NS5 nuclear localization.

The protein localises to the virion. It is found in the host nucleus. Its subcellular location is the host cytoplasm. It localises to the host perinuclear region. The protein resides in the secreted. The protein localises to the virion membrane. It is found in the host endoplasmic reticulum membrane. The enzyme catalyses Selective hydrolysis of -Xaa-Xaa-|-Yaa- bonds in which each of the Xaa can be either Arg or Lys and Yaa can be either Ser or Ala.. It carries out the reaction RNA(n) + a ribonucleoside 5'-triphosphate = RNA(n+1) + diphosphate. It catalyses the reaction a ribonucleoside 5'-triphosphate + H2O = a ribonucleoside 5'-diphosphate + phosphate + H(+). The catalysed reaction is ATP + H2O = ADP + phosphate + H(+). The enzyme catalyses a 5'-end (5'-triphosphoguanosine)-ribonucleoside in mRNA + S-adenosyl-L-methionine = a 5'-end (N(7)-methyl 5'-triphosphoguanosine)-ribonucleoside in mRNA + S-adenosyl-L-homocysteine. It carries out the reaction a 5'-end (N(7)-methyl 5'-triphosphoguanosine)-ribonucleoside in mRNA + S-adenosyl-L-methionine = a 5'-end (N(7)-methyl 5'-triphosphoguanosine)-(2'-O-methyl-ribonucleoside) in mRNA + S-adenosyl-L-homocysteine + H(+). Plays a role in virus budding by binding to the cell membrane and gathering the viral RNA into a nucleocapsid that forms the core of a mature virus particle. During virus entry, may induce genome penetration into the host cytoplasm after hemifusion induced by the surface proteins. Can migrate to the cell nucleus where it modulates host functions. In terms of biological role, inhibits RNA silencing by interfering with host Dicer. Functionally, prevents premature fusion activity of envelope proteins in trans-Golgi by binding to envelope protein E at pH6.0. After virion release in extracellular space, gets dissociated from E dimers. Its function is as follows. Acts as a chaperone for envelope protein E during intracellular virion assembly by masking and inactivating envelope protein E fusion peptide. prM is the only viral peptide matured by host furin in the trans-Golgi network probably to avoid catastrophic activation of the viral fusion activity in acidic Golgi compartment prior to virion release. prM-E cleavage is inefficient, and many virions are only partially matured. These uncleaved prM would play a role in immune evasion. May play a role in virus budding. Exerts cytotoxic effects by activating a mitochondrial apoptotic pathway through M ectodomain. May display a viroporin activity. In terms of biological role, binds to host cell surface receptor and mediates fusion between viral and cellular membranes. Envelope protein is synthesized in the endoplasmic reticulum in the form of heterodimer with protein prM. They play a role in virion budding in the ER, and the newly formed immature particle is covered with 60 spikes composed of heterodimer between precursor prM and envelope protein E. The virion is transported to the Golgi apparatus where the low pH causes dissociation of PrM-E heterodimers and formation of E homodimers. prM-E cleavage is inefficient, and many virions are only partially matured. These uncleaved prM would play a role in immune evasion. Functionally, involved in immune evasion, pathogenesis and viral replication. Once cleaved off the polyprotein, is targeted to three destinations: the viral replication cycle, the plasma membrane and the extracellular compartment. Essential for viral replication. Required for formation of the replication complex and recruitment of other non-structural proteins to the ER-derived membrane structures. Excreted as a hexameric lipoparticle that plays a role against host immune response. Antagonizing the complement function. Binds to the host macrophages and dendritic cells. Inhibits signal transduction originating from Toll-like receptor 3 (TLR3). Its function is as follows. Component of the viral RNA replication complex that functions in virion assembly and antagonizes the host immune response. Required cofactor for the serine protease function of NS3. May have membrane-destabilizing activity and form viroporins. In terms of biological role, displays three enzymatic activities: serine protease, NTPase and RNA helicase. NS3 serine protease, in association with NS2B, performs its autocleavage and cleaves the polyprotein at dibasic sites in the cytoplasm: C-prM, NS2A-NS2B, NS2B-NS3, NS3-NS4A, NS4A-2K and NS4B-NS5. NS3 RNA helicase binds RNA and unwinds dsRNA in the 3' to 5' direction. Also plays a role in virus assembly. Functionally, regulates the ATPase activity of the NS3 helicase activity. NS4A allows NS3 helicase to conserve energy during unwinding. Its function is as follows. Functions as a signal peptide for NS4B and is required for the interferon antagonism activity of the latter. Induces the formation of ER-derived membrane vesicles where the viral replication takes place. Inhibits interferon (IFN)-induced host STAT1 phosphorylation and nuclear translocation, thereby preventing the establishment of cellular antiviral state by blocking the IFN-alpha/beta pathway. In terms of biological role, replicates the viral (+) and (-) RNA genome, and performs the capping of genomes in the cytoplasm. NS5 methylates viral RNA cap at guanine N-7 and ribose 2'-O positions. Besides its role in RNA genome replication, also prevents the establishment of cellular antiviral state by blocking the interferon-alpha/beta (IFN-alpha/beta) signaling pathway. IFN-I induces binding of NS5 to host IFN-activated transcription factor STAT2, preventing its transcriptional activity. Host TRIM23 is the E3 ligase that interacts with and polyubiquitinates NS5 to promote its binding to STAT2 and trigger IFN-I signaling inhibition. The protein is Genome polyprotein of Yellow fever virus (isolate Ivory Coast/1999) (YFV).